A 512-amino-acid polypeptide reads, in one-letter code: Maturase K (512 aa).

The protein belongs to the intron maturase 2 family. MatK subfamily.

Its subcellular location is the plastid. The protein resides in the chloroplast. Functionally, usually encoded in the trnK tRNA gene intron. Probably assists in splicing its own and other chloroplast group II introns. The chain is Maturase K from Acer campestre (Field maple).